Here is a 315-residue protein sequence, read N- to C-terminus: 4-diphosphocytidyl-2-C-methyl-D-erythritol kinase (315 aa).

The active site involves K10. 107–117 serves as a coordination point for ATP; that stretch reads PVAGGMAGGSA. D148 is an active-site residue. The tract at residues 292 to 315 is disordered; it reads HPATSPVPGPAKNRGAHIVSIESE.

Belongs to the GHMP kinase family. IspE subfamily.

The enzyme catalyses 4-CDP-2-C-methyl-D-erythritol + ATP = 4-CDP-2-C-methyl-D-erythritol 2-phosphate + ADP + H(+). It functions in the pathway isoprenoid biosynthesis; isopentenyl diphosphate biosynthesis via DXP pathway; isopentenyl diphosphate from 1-deoxy-D-xylulose 5-phosphate: step 3/6. Catalyzes the phosphorylation of the position 2 hydroxy group of 4-diphosphocytidyl-2C-methyl-D-erythritol. The sequence is that of 4-diphosphocytidyl-2-C-methyl-D-erythritol kinase from Corynebacterium efficiens (strain DSM 44549 / YS-314 / AJ 12310 / JCM 11189 / NBRC 100395).